The primary structure comprises 416 residues: NADH-quinone oxidoreductase subunit D (416 aa).

It belongs to the complex I 49 kDa subunit family. As to quaternary structure, NDH-1 is composed of 14 different subunits. Subunits NuoB, C, D, E, F, and G constitute the peripheral sector of the complex.

The protein localises to the cell inner membrane. It carries out the reaction a quinone + NADH + 5 H(+)(in) = a quinol + NAD(+) + 4 H(+)(out). In terms of biological role, NDH-1 shuttles electrons from NADH, via FMN and iron-sulfur (Fe-S) centers, to quinones in the respiratory chain. The immediate electron acceptor for the enzyme in this species is believed to be ubiquinone. Couples the redox reaction to proton translocation (for every two electrons transferred, four hydrogen ions are translocated across the cytoplasmic membrane), and thus conserves the redox energy in a proton gradient. This is NADH-quinone oxidoreductase subunit D from Gluconacetobacter diazotrophicus (strain ATCC 49037 / DSM 5601 / CCUG 37298 / CIP 103539 / LMG 7603 / PAl5).